Reading from the N-terminus, the 386-residue chain is Putative aminotransferase YugH (386 aa).

Lys234 carries the N6-(pyridoxal phosphate)lysine modification.

The protein belongs to the class-I pyridoxal-phosphate-dependent aminotransferase family. It depends on pyridoxal 5'-phosphate as a cofactor.

It localises to the cytoplasm. The sequence is that of Putative aminotransferase YugH (yugH) from Bacillus subtilis (strain 168).